Consider the following 140-residue polypeptide: Putative pre-16S rRNA nuclease (140 aa).

Belongs to the YqgF nuclease family.

It is found in the cytoplasm. In terms of biological role, could be a nuclease involved in processing of the 5'-end of pre-16S rRNA. This Moorella thermoacetica (strain ATCC 39073 / JCM 9320) protein is Putative pre-16S rRNA nuclease.